The chain runs to 173 residues: Nascent polypeptide-associated complex subunit alpha (173 aa).

One can recognise an NAC-A/B domain in the interval 21 to 85 (VVHAEKAQKL…VTVEDMAAQA (65 aa)). Positions 89–117 (NESQKQATETKEEAAITEESGDAQPADTA) are disordered. Ser-122 carries the post-translational modification Phosphoserine. Residues 134 to 171 (VDAKDIELVMAQANVSRAKAVTALKENNSDVVNAIMSL) enclose the UBA domain.

The protein belongs to the NAC-alpha family. As to quaternary structure, part of the nascent polypeptide-associated complex (NAC), consisting of ucp15 and btf3. NAC associates with ribosomes via btf3.

It localises to the cytoplasm. Its subcellular location is the nucleus. Component of the nascent polypeptide-associated complex (NAC), a dynamic component of the ribosomal exit tunnel, protecting the emerging polypeptides from interaction with other cytoplasmic proteins to ensure appropriate nascent protein targeting. The NAC complex also promotes mitochondrial protein import by enhancing productive ribosome interactions with the outer mitochondrial membrane and blocks the inappropriate interaction of ribosomes translating non-secretory nascent polypeptides with translocation sites in the membrane of the endoplasmic reticulum. Ucp15 may also be involved in transcription regulation. The polypeptide is Nascent polypeptide-associated complex subunit alpha (egd2) (Schizosaccharomyces pombe (strain 972 / ATCC 24843) (Fission yeast)).